The primary structure comprises 305 residues: tRNA-cytidine(32) 2-sulfurtransferase (305 aa).

Residues M1–R20 form a disordered region. Positions S59–S64 match the PP-loop motif motif. [4Fe-4S] cluster-binding residues include C134, C137, and C225. A compositionally biased stretch (low complexity) spans D282–A293. The disordered stretch occupies residues D282–D305.

Belongs to the TtcA family. In terms of assembly, homodimer. Requires Mg(2+) as cofactor. It depends on [4Fe-4S] cluster as a cofactor.

The protein localises to the cytoplasm. It catalyses the reaction cytidine(32) in tRNA + S-sulfanyl-L-cysteinyl-[cysteine desulfurase] + AH2 + ATP = 2-thiocytidine(32) in tRNA + L-cysteinyl-[cysteine desulfurase] + A + AMP + diphosphate + H(+). It participates in tRNA modification. Functionally, catalyzes the ATP-dependent 2-thiolation of cytidine in position 32 of tRNA, to form 2-thiocytidine (s(2)C32). The sulfur atoms are provided by the cysteine/cysteine desulfurase (IscS) system. This chain is tRNA-cytidine(32) 2-sulfurtransferase, found in Xanthomonas oryzae pv. oryzae (strain MAFF 311018).